A 353-amino-acid polypeptide reads, in one-letter code: Endophilin-A3 (353 aa).

The tract at residues 1 to 21 is membrane-binding amphipathic helix; that stretch reads MSVAGLKKQFHKASQLFSEKI. The BAR domain maps to 18 to 249; that stretch reads SEKISGAEGT…LQNRINVASS (232 aa). A required for dimerization upon membrane association region spans residues 60-87; it reads PNPAYRAKLGMLNTMSKIRGQVKTTGYP. Positions 180-201 form a coiled coil; that stretch reads DEEVKQAVEKFEESKELAERSM. Residues 218 to 254 are interaction with ARC; that stretch reads FVEAALDYHKQSTEILEDLQSKLQNRINVASSRPKRE. Positions 291–350 constitute an SH3 domain; the sequence is VDQPCCQALYDFEPENEGELGFKEGDIITLTNQIDENWYEGMLNGESGFFPHNYVEVMVP.

It belongs to the endophilin family. In terms of assembly, interacts with ARC. Interacts with SYNJ1 and DNM1. In terms of tissue distribution, highest level in a region associated with endocytosis of yolk proteins in developing oocytes (at protein level). Highest level in small ovarian follicles. High levels in brain and testis. Lower level in adrenal glands.

It is found in the cytoplasm. Its subcellular location is the early endosome membrane. Functionally, implicated in endocytosis. May recruit other proteins to membranes with high curvature. Implicated in endocytosis of yolk proteins during oogenesis. The sequence is that of Endophilin-A3 from Gallus gallus (Chicken).